Consider the following 374-residue polypeptide: NAD-capped RNA hydrolase ndx-9 (374 aa).

Positions 181, 184, 199, and 202 each coordinate Zn(2+). Substrate is bound by residues Tyr-207, 243-245 (AGF), Glu-259, Glu-263, and Glu-307. In terms of domain architecture, Nudix hydrolase spans 208-336 (PTFSPVSITL…LADPLLKNLP (129 aa)). Residues Ala-243, Glu-259, Glu-263, and Glu-307 each contribute to the Mg(2+) site. Residues 244–265 (GFAHSGESMAECARREIAEEVG) carry the Nudix box motif. The Microbody targeting signal signature appears at 367–369 (LEN).

It belongs to the Nudix hydrolase family. NudC subfamily. In terms of assembly, homodimer. Mg(2+) is required as a cofactor. It depends on Mn(2+) as a cofactor. The cofactor is Zn(2+).

The catalysed reaction is a 5'-end NAD(+)-phospho-ribonucleoside in mRNA + H2O = a 5'-end phospho-adenosine-phospho-ribonucleoside in mRNA + beta-nicotinamide D-ribonucleotide + 2 H(+). It catalyses the reaction NAD(+) + H2O = beta-nicotinamide D-ribonucleotide + AMP + 2 H(+). It carries out the reaction NADH + H2O = reduced beta-nicotinamide D-ribonucleotide + AMP + 2 H(+). MRNA decapping enzyme that specifically removes the nicotinamide adenine dinucleotide (NAD) cap from a subset of mRNAs by hydrolyzing the diphosphate linkage to produce nicotinamide mononucleotide (NMN) and 5' monophosphate mRNA. The NAD-cap is present at the 5'-end of some RNAs; in contrast to the canonical N7 methylguanosine (m7G) cap, the NAD cap promotes mRNA decay. Mediates the hydrolysis of some nucleoside diphosphate derivatives. The protein is NAD-capped RNA hydrolase ndx-9 (ndx-9) of Caenorhabditis elegans.